We begin with the raw amino-acid sequence, 102 residues long: Small ribosomal subunit protein uS10 (102 aa).

The protein belongs to the universal ribosomal protein uS10 family. Part of the 30S ribosomal subunit.

In terms of biological role, involved in the binding of tRNA to the ribosomes. This is Small ribosomal subunit protein uS10 from Rhodospirillum rubrum (strain ATCC 11170 / ATH 1.1.1 / DSM 467 / LMG 4362 / NCIMB 8255 / S1).